A 496-amino-acid polypeptide reads, in one-letter code: Probable cytosol aminopeptidase (496 aa).

Positions 262 and 267 each coordinate Mn(2+). Lys274 is an active-site residue. The Mn(2+) site is built by Asp285, Asp344, and Glu346. The active site involves Arg348.

The protein belongs to the peptidase M17 family. The cofactor is Mn(2+).

It localises to the cytoplasm. It carries out the reaction Release of an N-terminal amino acid, Xaa-|-Yaa-, in which Xaa is preferably Leu, but may be other amino acids including Pro although not Arg or Lys, and Yaa may be Pro. Amino acid amides and methyl esters are also readily hydrolyzed, but rates on arylamides are exceedingly low.. The enzyme catalyses Release of an N-terminal amino acid, preferentially leucine, but not glutamic or aspartic acids.. Its function is as follows. Presumably involved in the processing and regular turnover of intracellular proteins. Catalyzes the removal of unsubstituted N-terminal amino acids from various peptides. The chain is Probable cytosol aminopeptidase from Rhizobium johnstonii (strain DSM 114642 / LMG 32736 / 3841) (Rhizobium leguminosarum bv. viciae).